The primary structure comprises 482 residues: MVQLNQNFINTIAQELPAHLSMDDFIAACSRPLRRSIRVNTLKISSEDFKQLMLPKGWTFEPIPWCEDGFWISYDEEEQLGNALEHIQGLFYIQEASSMLPPTALFTPNADWQCVLDLASAPGSKTTQMAALMNNQGLLVANEYSASRVKVLHANVLRMGASHCALTHFDGRVFGEYLYESFDAVLIDAPCGGEGTVRKDADALKSWSLDEVLEISETQKALIESAFLALKPGGSLVYSTCTLNRHENQGVCEYLQQTYGDAVQFESLSQLFDGAEKATTPEGFLHVWPQIYDSEGFFVAKLTKTRSVPRLQPEPKLQKNFPFTEASAKQAKAIQAYFADDLGIKLPDDLIMVRDDEFWLFPHEFRDFIGKMRFQRIGVKLADHSKHGFKVRHEAIIALAGKALTAGAANGAKVVDVSDEQAKEYLMGRDIPLDTAGKAQGEVIVCYGGAPLGMAKHLGNKLKNSLPRDLVKDKVLLLPPQA.

Residues 119-125 (ASAPGSK), glutamate 143, aspartate 170, and aspartate 188 contribute to the S-adenosyl-L-methionine site. Cysteine 241 serves as the catalytic Nucleophile.

It belongs to the class I-like SAM-binding methyltransferase superfamily. RsmB/NOP family.

It is found in the cytoplasm. The enzyme catalyses cytidine(1407) in 16S rRNA + S-adenosyl-L-methionine = 5-methylcytidine(1407) in 16S rRNA + S-adenosyl-L-homocysteine + H(+). Specifically methylates the cytosine at position 1407 (m5C1407) of 16S rRNA. This chain is Ribosomal RNA small subunit methyltransferase F, found in Shewanella sp. (strain MR-7).